A 254-amino-acid polypeptide reads, in one-letter code: Transcription factor CAULIFLOWER (254 aa).

An MADS-box domain is found at methionine 1–serine 61. One can recognise a K-box domain in the interval glutamine 90–isoleucine 180. A compositionally biased stretch (polar residues) spans arginine 182–glutamine 191. The tract at residues arginine 182–leucine 205 is disordered.

As to quaternary structure, homodimer capable of binding to CArG-box sequences.

The protein resides in the nucleus. Functionally, probable transcription factor that promotes early floral meristem identity in synergy with APETALA1, FRUITFULL and LEAFY. Is required subsequently for the transition of an inflorescence meristem into a floral meristem. Seems to be partially redundant to the function of APETALA1. The chain is Transcription factor CAULIFLOWER (CAL) from Brassica rapa subsp. pekinensis (Chinese cabbage).